Reading from the N-terminus, the 614-residue chain is MSENKLFCAIVFLTSLFCSTCSQGTRFVHSAALDAERRYNIKWGFDESTITFEIEVETRGYVGFGLSPTGAMSSSDIVIGGVLNGSPYLLDYFTDSNRKVHRDPLQNYELLYGRENDTHTVLAFSRNLQTCDDNDKIITGSTVRVIWAFHAEDVGESGLVYHGMNRGRKSLRLLNPGTGPSIPAGTAFFDLQNKEVPVPHKDTTYWCQIFRFPEMKKKHHVIRIEPLIQKGHENLVHHILLYQCDSNLNKSEVNRGHECYHPNMPDSFLTCETVLFAWAIGGEGFTYPPHVGMSIGTSIDPVYVQLEIHFDNPSLQGGIVDSSGLRLYYSPSLRRYDAGVIETGVWVSLYHMLPPGMTDYITEGHCTQECLQESLDSEMPSGVHVFAVLLHAHLAGRAITARHFRQQLELQPLASDDQFDFNFQEFQPLSQERLILPGDSLITECRYNTKGRMNMTWGGLSTREEMCLSFLLYYPRVNLAKCESLPEIAGQLKFIGVTEIQEPVTTWPFVIKSPKKYSNLSFTEAMDKYKWTMKKGKSFNDIVRKLPMNVRCSKTGQDEWSIQGMIVSPPEVRSEQTSTAVVACRKDSAIQCEHSLALLLTACLLLILQTCLHL.

Positions 1-22 (MSENKLFCAIVFLTSLFCSTCS) are cleaved as a signal peptide. The Lumenal portion of the chain corresponds to 23–593 (QGTRFVHSAA…CRKDSAIQCE (571 aa)). A DOMON domain is found at 37 to 150 (RRYNIKWGFD…STVRVIWAFH (114 aa)). The N-linked (GlcNAc...) asparagine glycan is linked to Asn116. Tyr205 is a catalytic residue. 2 disulfides stabilise this stretch: Cys207–Cys259 and Cys244–Cys271. The Cu cation site is built by His237 and His238. A glycan (N-linked (GlcNAc...) asparagine) is linked at Asn249. Cu cation contacts are provided by His309, His391, and His393. Cystine bridges form between Cys366–Cys482, Cys370–Cys552, and Cys445–Cys467. His391 is an active-site residue. A glycan (N-linked (GlcNAc...) asparagine) is linked at Asn454. Residue Met466 participates in Cu cation binding. A glycan (N-linked (GlcNAc...) asparagine) is linked at Asn519. A helical transmembrane segment spans residues 594-612 (HSLALLLTACLLLILQTCL).

This sequence belongs to the copper type II ascorbate-dependent monooxygenase family. Requires Cu(2+) as cofactor.

The protein resides in the endoplasmic reticulum membrane. This chain is DBH-like monooxygenase protein 1 homolog (moxd1), found in Danio rerio (Zebrafish).